The chain runs to 221 residues: Phosphate-specific transport system accessory protein PhoU homolog 1 (221 aa).

The protein belongs to the PhoU family. As to quaternary structure, homodimer.

The protein resides in the cytoplasm. Its function is as follows. Plays a role in the regulation of phosphate uptake. In this role, it may bind, possibly as a chaperone, to PhoR, PhoP or a PhoR-PhoP complex to promote dephosphorylation of phospho-PhoP, or inhibit formation of the PhoR-PhoP transitory complex. This chain is Phosphate-specific transport system accessory protein PhoU homolog 1 (phoU1), found in Mycobacterium bovis (strain ATCC BAA-935 / AF2122/97).